The following is a 336-amino-acid chain: Iron-uptake system permease protein FeuC (336 aa).

9 helical membrane passes run 7–27, 57–77, 85–105, 120–140, 150–170, 191–211, 246–266, 280–300, and 308–328; these read LFIA…SFSV, VVMA…IQAI, PGIL…MLLF, MPLF…IFAW, IILV…FLSL, ANWT…PILI, VAII…GLIA, YILP…DFAG, and EVPA…YLLF.

This sequence belongs to the binding-protein-dependent transport system permease family. FecCD subfamily. The complex is composed of one ATP-binding protein (YusV), two transmembrane proteins (FeuB and FeuC) and a solute-binding protein (FeuA).

It localises to the cell membrane. Functionally, involved in the uptake of iron. Probably responsible for the translocation of the substrate across the membrane. Part of the ABC transporter complex FeuABC/YusV involved in import of the catecholate siderophores bacillibactin and enterobactin. This Bacillus subtilis (strain 168) protein is Iron-uptake system permease protein FeuC (feuC).